Here is a 234-residue protein sequence, read N- to C-terminus: Orotidine 5'-phosphate decarboxylase (234 aa).

Substrate is bound by residues Asp-10, Lys-32, 59–68 (DLKFHDIPNT), Thr-119, Arg-180, Gln-189, Gly-209, and Arg-210. Catalysis depends on Lys-61, which acts as the Proton donor.

This sequence belongs to the OMP decarboxylase family. Type 1 subfamily. As to quaternary structure, homodimer.

The catalysed reaction is orotidine 5'-phosphate + H(+) = UMP + CO2. The protein operates within pyrimidine metabolism; UMP biosynthesis via de novo pathway; UMP from orotate: step 2/2. Its function is as follows. Catalyzes the decarboxylation of orotidine 5'-monophosphate (OMP) to uridine 5'-monophosphate (UMP). The chain is Orotidine 5'-phosphate decarboxylase from Mannheimia succiniciproducens (strain KCTC 0769BP / MBEL55E).